A 394-amino-acid chain; its full sequence is Nuclear pore glycoprotein p62 (394 aa).

5 tandem repeats follow at residues 22–23 (FG), 50–51 (FG), 75–76 (FG), 77–78 (FG), and 116–117 (FG). The segment at 22–117 (FGLSTGTPAA…GTSAAPPAFG (96 aa)) is 5 X 2 AA repeats of F-G. Low complexity predominate over residues 45-57 (KTTFSFGTPAPTA). Residues 45–73 (KTTFSFGTPAPTAGIGGGDADNSKAQAPP) are disordered. Residues 211–341 (SYHQLEEHIN…DNLNEANKGQ (131 aa)) adopt a coiled-coil conformation.

The protein belongs to the nucleoporin NSP1/NUP62 family. Expressed in adult male accessory glands (at protein level).

It is found in the nucleus. Its subcellular location is the chromosome. It localises to the nucleus envelope. The protein resides in the nuclear pore complex. The protein localises to the cytoplasm. It is found in the cytoskeleton. Its subcellular location is the spindle pole. It localises to the microtubule organizing center. The protein resides in the centrosome. In terms of biological role, essential component of the nuclear pore complex. The N-terminal is probably involved in nucleocytoplasmic transport. The C-terminal is involved in protein-protein interaction probably via coiled-coil formation, promotes its association with centrosomes and may function in anchorage of Nup62 to the pore complex. Binds to transcriptionally active genes. Negatively regulates chromatin attachment to the nuclear envelope, probably by preventing chromatin tethering by Nup154. The chain is Nuclear pore glycoprotein p62 from Drosophila melanogaster (Fruit fly).